The primary structure comprises 455 residues: Growth/differentiation factor 6 (455 aa).

An N-terminal signal peptide occupies residues 1–22 (MDTPRVLLSAVFLISFLWDLPG). Residues 23-335 (FQQASISSSS…LPSPGRRRRR (313 aa)) constitute a propeptide that is removed on maturation. The tract at residues 29–93 (SSSSSSAELG…EPPGRGPRVV (65 aa)) is disordered. The segment covering 45–76 (SRKEGKMQRAPRDSDAGREGQEPQPRPQDEPR) has biased composition (basic and acidic residues). Positions 77-91 (AQQPRAQEPPGRGPR) are enriched in low complexity. The N-linked (GlcNAc...) asparagine glycan is linked to N114. Disordered stretches follow at residues 244–267 (EAEARARGPQQPPPPDLRSLGFGR) and 300–351 (AEAA…KKSR). The segment covering 330-351 (GRRRRRTAFASRHGKRHGKKSR) has biased composition (basic residues). Intrachain disulfides connect C354–C420, C383–C452, and C387–C454.

The protein belongs to the TGF-beta family. In terms of assembly, homodimer; disulfide-linked.

It localises to the secreted. Functionally, growth factor that controls proliferation and cellular differentiation in the retina and bone formation. Plays a key role in regulating apoptosis during retinal development. Establishes dorsal-ventral positional information in the retina and controls the formation of the retinotectal map. Required for normal formation of bones and joints in the limbs, skull, digits and axial skeleton. Plays a key role in establishing boundaries between skeletal elements during development. Regulation of GDF6 expression seems to be a mechanism for evolving species-specific changes in skeletal structures. Seems to positively regulate differentiation of chondrogenic tissue through the growth factor receptors subunits BMPR1A, BMPR1B, BMPR2 and ACVR2A, leading to the activation of SMAD1-SMAD5-SMAD8 complex. The regulation of chondrogenic differentiation is inhibited by NOG. Also involved in the induction of adipogenesis from mesenchymal stem cells. This mechanism acts through the growth factor receptors subunits BMPR1A, BMPR2 and ACVR2A and the activation of SMAD1-SMAD5-SMAD8 complex and MAPK14/p38. The sequence is that of Growth/differentiation factor 6 (GDF6) from Homo sapiens (Human).